The chain runs to 334 residues: Glyceraldehyde-3-phosphate dehydrogenase (334 aa).

NAD(+) contacts are provided by residues 12-13 (TI) and G111. A D-glyceraldehyde 3-phosphate-binding site is contributed by 140 to 142 (SCN). C141 (nucleophile) is an active-site residue. R167 contacts NAD(+). 192–193 (HG) is a D-glyceraldehyde 3-phosphate binding site. Position 298 (Q298) interacts with NAD(+).

Belongs to the glyceraldehyde-3-phosphate dehydrogenase family. In terms of assembly, homotetramer.

The protein resides in the cytoplasm. It catalyses the reaction D-glyceraldehyde 3-phosphate + phosphate + NADP(+) = (2R)-3-phospho-glyceroyl phosphate + NADPH + H(+). The enzyme catalyses D-glyceraldehyde 3-phosphate + phosphate + NAD(+) = (2R)-3-phospho-glyceroyl phosphate + NADH + H(+). It functions in the pathway carbohydrate degradation; glycolysis; pyruvate from D-glyceraldehyde 3-phosphate: step 1/5. The sequence is that of Glyceraldehyde-3-phosphate dehydrogenase from Thermococcus kodakarensis (strain ATCC BAA-918 / JCM 12380 / KOD1) (Pyrococcus kodakaraensis (strain KOD1)).